A 96-amino-acid polypeptide reads, in one-letter code: Dynein light chain roadblock-type 1 (96 aa).

The residue at position 2 (Ala2) is an N-acetylalanine.

This sequence belongs to the GAMAD family. As to quaternary structure, homodimer. The cytoplasmic dynein 1 complex consists of two catalytic heavy chains (HCs) and a number of non-catalytic subunits presented by intermediate chains (ICs), light intermediate chains (LICs) and light chains (LCs); the composition seems to vary in respect to the IC, LIC and LC composition. The heavy chain homodimer serves as a scaffold for the probable homodimeric assembly of the respective non-catalytic subunits. The ICs and LICs bind directly to the HC dimer and the LCs assemble on the IC dimer. Interacts with DYNLRB2. Interacts with DYNC1I1 and DYNC1I2. Interacts with RAB6A isoform 1 (GTP-bound); the interaction is direct. Interacts with RAB6A isoform 2 (GDP-bound); the interaction is direct. Interacts with RAB6B (GDP-bound). As to expression, high expression in heart, liver, brain and pancreas; moderate in placenta, skeletal muscle and kidney; low in lung, prostate, testis, small intestine and colon. Isoform 1 expression is up-regulated in 64% hepatocellular carcinoma (HCC) patients.

It is found in the cytoplasm. The protein resides in the cytoskeleton. Acts as one of several non-catalytic accessory components of the cytoplasmic dynein 1 complex that are thought to be involved in linking dynein to cargos and to adapter proteins that regulate dynein function. Cytoplasmic dynein 1 acts as a motor for the intracellular retrograde motility of vesicles and organelles along microtubules. The polypeptide is Dynein light chain roadblock-type 1 (Homo sapiens (Human)).